A 61-amino-acid polypeptide reads, in one-letter code: Photosystem II reaction center protein K (61 aa).

Residues 1–24 (MLNIFSLISICLNSALYSSSFFFG) constitute a propeptide that is removed on maturation. A helical membrane pass occupies residues 40–60 (MPVIPVFFFLLAFVWQAAVSF).

This sequence belongs to the PsbK family. In terms of assembly, PSII is composed of 1 copy each of membrane proteins PsbA, PsbB, PsbC, PsbD, PsbE, PsbF, PsbH, PsbI, PsbJ, PsbK, PsbL, PsbM, PsbT, PsbX, PsbY, PsbZ, Psb30/Ycf12, at least 3 peripheral proteins of the oxygen-evolving complex and a large number of cofactors. It forms dimeric complexes.

It localises to the plastid. Its subcellular location is the chloroplast thylakoid membrane. One of the components of the core complex of photosystem II (PSII). PSII is a light-driven water:plastoquinone oxidoreductase that uses light energy to abstract electrons from H(2)O, generating O(2) and a proton gradient subsequently used for ATP formation. It consists of a core antenna complex that captures photons, and an electron transfer chain that converts photonic excitation into a charge separation. The protein is Photosystem II reaction center protein K of Jasminum nudiflorum (Winter jasmine).